Reading from the N-terminus, the 2212-residue chain is Nonribosomal peptide synthetase ftmPS (2212 aa).

The adenylation 1 stretch occupies residues 74–473 (TYAELDSLSD…IEHHLQQTLP (400 aa)). Residues 592-669 (PPSTLKETTI…EQSQRAGLIQ (78 aa)) form the Carrier 1 domain. At Ser629 the chain carries O-(pantetheine 4'-phosphoryl)serine. The segment at 708–973 (EDIYPCTALQ…IATVPLRIRV (266 aa)) is condensation 1. Positions 1167 to 1564 (TYRELWAHSS…LSAVEASLMR (398 aa)) are adenylation 2. In terms of domain architecture, Carrier 2 spans 1678–1757 (PMSDDNERRL…QFRHLITEDD (80 aa)). Ser1715 carries the O-(pantetheine 4'-phosphoryl)serine modification. Residues 1815–2070 (HFQFDLSGAI…CTNYIPYRLS (256 aa)) are condensation 2.

The protein belongs to the NRP synthetase family.

The enzyme catalyses L-proline + L-tryptophan + 2 ATP = brevianamide F + 2 AMP + 2 diphosphate + 2 H(+). Its pathway is mycotoxin biosynthesis. Nonribosomal peptide synthetase; part of the gene cluster that mediates the biosynthesis of fumitremorgins, indole alkaloids that carry not only intriguing chemical structures, but also interesting biological and pharmacological activities. The biosynthesis of fumitremorgin-type alkaloids begins by condensation of the two amino acids L-tryptophan and L-proline to brevianamide F, catalyzed by the non-ribosomal peptide synthetase ftmPS/ftmA. Brevianamide F is then prenylated by the prenyltransferase ftmPT1/ftmB in the presence of dimethylallyl diphosphate, resulting in the formation of tryprostatin B. The three cytochrome P450 monooxygenases, ftmP450-1/ftmC, ftmP450-2/ftmE and ftmP450-3/FtmG, are responsible for the conversion of tryprostatin B to 6-hydroxytryprostatin B, tryprostatin A to fumitremorgin C and fumitremorgin C to 12,13-dihydroxyfumitremorgin C, respectively. The putative methyltransferase ftmMT/ftmD is expected for the conversion of 6-hydroxytryprostatin B to tryprostatin A. FtmPT2/FtmH catalyzes the prenylation of 12,13-dihydroxyfumitre-morgin C in the presence of dimethylallyl diphosphate, resulting in the formation of fumitremorgin B. Fumitremorgin B is further converted to verruculogen by ftmOx1/ftmF via the insertion of an endoperoxide bond between the two prenyl moieties. Finally, verruculogen is further converted to fumitremorgin A by the verruculogen prenyltransferase ftmPT3. This is Nonribosomal peptide synthetase ftmPS (ftmPS) from Neosartorya fischeri (strain ATCC 1020 / DSM 3700 / CBS 544.65 / FGSC A1164 / JCM 1740 / NRRL 181 / WB 181) (Aspergillus fischerianus).